Reading from the N-terminus, the 636-residue chain is Phosphomethylpyrimidine synthase (636 aa).

The disordered stretch occupies residues 48–70 (DDTPTDFGGEKNPPVRVYDTSGP). Residues Asn231, Met260, Tyr289, His325, 345 to 347 (SRG), 386 to 389 (DGLR), and Glu425 each bind substrate. Zn(2+) is bound at residue His429. Tyr452 is a binding site for substrate. His493 is a binding site for Zn(2+). Residues Cys573, Cys576, and Cys581 each contribute to the [4Fe-4S] cluster site.

This sequence belongs to the ThiC family. Homodimer. The cofactor is [4Fe-4S] cluster.

The enzyme catalyses 5-amino-1-(5-phospho-beta-D-ribosyl)imidazole + S-adenosyl-L-methionine = 4-amino-2-methyl-5-(phosphooxymethyl)pyrimidine + CO + 5'-deoxyadenosine + formate + L-methionine + 3 H(+). It participates in cofactor biosynthesis; thiamine diphosphate biosynthesis. Its function is as follows. Catalyzes the synthesis of the hydroxymethylpyrimidine phosphate (HMP-P) moiety of thiamine from aminoimidazole ribotide (AIR) in a radical S-adenosyl-L-methionine (SAM)-dependent reaction. This is Phosphomethylpyrimidine synthase from Cellvibrio japonicus (strain Ueda107) (Pseudomonas fluorescens subsp. cellulosa).